The sequence spans 432 residues: Ornithine decarboxylase, chloroplastic (432 aa).

Lysine 95 carries the post-translational modification N6-(pyridoxal phosphate)lysine. Residues serine 227, glycine 265, and glutamate 298–arginine 301 each bind pyridoxal 5'-phosphate. Tyrosine 341–aspartate 342 serves as a coordination point for substrate. The Proton donor; shared with dimeric partner role is filled by cysteine 377. Residue aspartate 378 participates in substrate binding. Tyrosine 406 contributes to the pyridoxal 5'-phosphate binding site.

It belongs to the Orn/Lys/Arg decarboxylase class-II family. Homodimer. Only the dimer is catalytically active, as the active sites are constructed of residues from both monomers. Requires pyridoxal 5'-phosphate as cofactor.

It localises to the plastid. It is found in the chloroplast. It carries out the reaction L-lysine + H(+) = cadaverine + CO2. The catalysed reaction is L-ornithine + H(+) = putrescine + CO2. It functions in the pathway alkaloid biosynthesis; nicotine biosynthesis. It participates in amine and polyamine biosynthesis; putrescine biosynthesis via L-ornithine pathway; putrescine from L-ornithine: step 1/1. Its activity is regulated as follows. Repressed by alpha-difluoromethylornithine (DFMO), 5,5'-dithiobis-(2-nitrobenzoic acid) (DTNB) and salicylaldehyde. In terms of biological role, involved in the biosynthesis of pyridine alkaloid natural products, leading mainly to the production of anabasine, anatabine, nicotine and nornicotine, effective deterrents against herbivores with antiparasitic and pesticide properties (neurotoxins); nornicotine serves as the precursor in the synthesis of the carcinogen compound N'-nitrosonornicotine (NNN). Catalyzes the first and rate-limiting step of polyamine biosynthesis that converts ornithine into putrescine, which is the precursor for the polyamines, spermidine and spermine. Can also use, with a lower efficiency, L-lysine as substrate to produce cadaverine. Polyamines are essential for cell proliferation and are implicated in cellular processes, ranging from DNA replication to apoptosis. This is Ornithine decarboxylase, chloroplastic from Nicotiana glutinosa (Tobacco).